A 283-amino-acid polypeptide reads, in one-letter code: Pantothenate synthetase (283 aa).

26 to 33 (MGNLHEGH) lines the ATP pocket. His-33 functions as the Proton donor in the catalytic mechanism. Residue Gln-57 coordinates (R)-pantoate. Gln-57 is a binding site for beta-alanine. 144–147 (GKKD) serves as a coordination point for ATP. Residue Gln-150 participates in (R)-pantoate binding. ATP contacts are provided by residues Val-173 and 181 to 184 (LSSR).

Belongs to the pantothenate synthetase family. In terms of assembly, homodimer.

The protein resides in the cytoplasm. The catalysed reaction is (R)-pantoate + beta-alanine + ATP = (R)-pantothenate + AMP + diphosphate + H(+). The protein operates within cofactor biosynthesis; (R)-pantothenate biosynthesis; (R)-pantothenate from (R)-pantoate and beta-alanine: step 1/1. In terms of biological role, catalyzes the condensation of pantoate with beta-alanine in an ATP-dependent reaction via a pantoyl-adenylate intermediate. This chain is Pantothenate synthetase, found in Ralstonia pickettii (strain 12J).